A 260-amino-acid chain; its full sequence is Malonyl-[acyl-carrier protein] O-methyltransferase (260 aa).

Belongs to the methyltransferase superfamily.

The enzyme catalyses malonyl-[ACP] + S-adenosyl-L-methionine = malonyl-[ACP] methyl ester + S-adenosyl-L-homocysteine. Its pathway is cofactor biosynthesis; biotin biosynthesis. Its function is as follows. Converts the free carboxyl group of a malonyl-thioester to its methyl ester by transfer of a methyl group from S-adenosyl-L-methionine (SAM). It allows to synthesize pimeloyl-ACP via the fatty acid synthetic pathway. This chain is Malonyl-[acyl-carrier protein] O-methyltransferase, found in Chlorobium phaeovibrioides (strain DSM 265 / 1930) (Prosthecochloris vibrioformis (strain DSM 265)).